Here is a 448-residue protein sequence, read N- to C-terminus: Methylenetetrahydrofolate--tRNA-(uracil-5-)-methyltransferase TrmFO (448 aa).

13-18 (GAGLAG) lines the FAD pocket.

This sequence belongs to the MnmG family. TrmFO subfamily. FAD is required as a cofactor.

It localises to the cytoplasm. It carries out the reaction uridine(54) in tRNA + (6R)-5,10-methylene-5,6,7,8-tetrahydrofolate + NADH + H(+) = 5-methyluridine(54) in tRNA + (6S)-5,6,7,8-tetrahydrofolate + NAD(+). It catalyses the reaction uridine(54) in tRNA + (6R)-5,10-methylene-5,6,7,8-tetrahydrofolate + NADPH + H(+) = 5-methyluridine(54) in tRNA + (6S)-5,6,7,8-tetrahydrofolate + NADP(+). In terms of biological role, catalyzes the folate-dependent formation of 5-methyl-uridine at position 54 (M-5-U54) in all tRNAs. This chain is Methylenetetrahydrofolate--tRNA-(uracil-5-)-methyltransferase TrmFO, found in Streptococcus pyogenes serotype M12 (strain MGAS2096).